Reading from the N-terminus, the 360-residue chain is Peptide chain release factor 1 (360 aa).

Gln-236 bears the N5-methylglutamine mark. Residues 288–308 (QDEQDAERKSTIGTGDRSERI) are disordered. The span at 293–308 (AERKSTIGTGDRSERI) shows a compositional bias: basic and acidic residues.

It belongs to the prokaryotic/mitochondrial release factor family. Post-translationally, methylated by PrmC. Methylation increases the termination efficiency of RF1.

It localises to the cytoplasm. In terms of biological role, peptide chain release factor 1 directs the termination of translation in response to the peptide chain termination codons UAG and UAA. This Streptococcus equi subsp. zooepidemicus (strain H70) protein is Peptide chain release factor 1.